A 429-amino-acid chain; its full sequence is Chaperone SurA (429 aa).

The signal sequence occupies residues 1–19 (MKKTLLALLIASVMQSALA). PpiC domains follow at residues 172 to 273 (RTEY…KLVD) and 283 to 381 (VEQY…LVEG).

It localises to the periplasm. It carries out the reaction [protein]-peptidylproline (omega=180) = [protein]-peptidylproline (omega=0). In terms of biological role, chaperone involved in the correct folding and assembly of outer membrane proteins. Recognizes specific patterns of aromatic residues and the orientation of their side chains, which are found more frequently in integral outer membrane proteins. May act in both early periplasmic and late outer membrane-associated steps of protein maturation. In Chromobacterium violaceum (strain ATCC 12472 / DSM 30191 / JCM 1249 / CCUG 213 / NBRC 12614 / NCIMB 9131 / NCTC 9757 / MK), this protein is Chaperone SurA.